Reading from the N-terminus, the 417-residue chain is D-amino acid dehydrogenase (417 aa).

Residue 3 to 17 participates in FAD binding; sequence VVILGSGVIGVTSAW.

The protein belongs to the DadA oxidoreductase family. It depends on FAD as a cofactor.

It catalyses the reaction a D-alpha-amino acid + A + H2O = a 2-oxocarboxylate + AH2 + NH4(+). The protein operates within amino-acid degradation; D-alanine degradation; NH(3) and pyruvate from D-alanine: step 1/1. Functionally, oxidative deamination of D-amino acids. The sequence is that of D-amino acid dehydrogenase from Edwardsiella ictaluri (strain 93-146).